The following is a 440-amino-acid chain: tRNA-2-methylthio-N(6)-dimethylallyladenosine synthase (440 aa).

An MTTase N-terminal domain is found at 5-121 (KKLYIKTYGC…LPEMEAKAGT (117 aa)). The [4Fe-4S] cluster site is built by cysteine 14, cysteine 50, cysteine 84, cysteine 159, cysteine 163, and cysteine 166. The Radical SAM core domain occupies 145 to 378 (AKRGPTAFLT…LTRQQREVQD (234 aa)). Residues 378–440 (DSMVGRELGV…ANSLAGELID (63 aa)) form the TRAM domain.

It belongs to the methylthiotransferase family. MiaB subfamily. In terms of assembly, monomer. It depends on [4Fe-4S] cluster as a cofactor.

The protein resides in the cytoplasm. It catalyses the reaction N(6)-dimethylallyladenosine(37) in tRNA + (sulfur carrier)-SH + AH2 + 2 S-adenosyl-L-methionine = 2-methylsulfanyl-N(6)-dimethylallyladenosine(37) in tRNA + (sulfur carrier)-H + 5'-deoxyadenosine + L-methionine + A + S-adenosyl-L-homocysteine + 2 H(+). Its function is as follows. Catalyzes the methylthiolation of N6-(dimethylallyl)adenosine (i(6)A), leading to the formation of 2-methylthio-N6-(dimethylallyl)adenosine (ms(2)i(6)A) at position 37 in tRNAs that read codons beginning with uridine. This is tRNA-2-methylthio-N(6)-dimethylallyladenosine synthase from Ruegeria sp. (strain TM1040) (Silicibacter sp.).